The primary structure comprises 205 residues: Protein DEPP1 (205 aa).

Polar residues-rich tracts occupy residues 55–64 and 83–101; these read DKVTAQSRPN and GDSS…SPGT. The tract at residues 55 to 171 is disordered; sequence DKVTAQSRPN…RHQTSDLKSW (117 aa). Residues 138 to 155 are compositionally biased toward basic and acidic residues; sequence MGKDTGRLCEARVPEHSL.

The protein resides in the cytoplasm. It localises to the peroxisome. It is found in the mitochondrion. In terms of biological role, acts as a critical modulator of FOXO3-induced autophagy via increased cellular ROS. The protein is Protein DEPP1 (Depp1) of Mus musculus (Mouse).